Here is a 226-residue protein sequence, read N- to C-terminus: NADH-ubiquinone oxidoreductase 19.3 kDa subunit, mitochondrial (226 aa).

Residues 40–68 (ATGAVAPAGAQHGIARRERREVPLPSQEG) are disordered. Positions 101, 102, 166, and 196 each coordinate [4Fe-4S] cluster.

Belongs to the complex I 20 kDa subunit family. As to quaternary structure, complex I is composed of about 40 different subunits. This is a component of the iron-sulfur (IP) fragment of the enzyme. [4Fe-4S] cluster serves as cofactor.

The protein localises to the mitochondrion. It catalyses the reaction a ubiquinone + NADH + 5 H(+)(in) = a ubiquinol + NAD(+) + 4 H(+)(out). In terms of biological role, core subunit of the mitochondrial membrane respiratory chain NADH dehydrogenase (Complex I) that is believed to belong to the minimal assembly required for catalysis. Complex I functions in the transfer of electrons from NADH to the respiratory chain. The immediate electron acceptor for the enzyme is believed to be ubiquinone. This is NADH-ubiquinone oxidoreductase 19.3 kDa subunit, mitochondrial from Neurospora crassa (strain ATCC 24698 / 74-OR23-1A / CBS 708.71 / DSM 1257 / FGSC 987).